A 271-amino-acid polypeptide reads, in one-letter code: Eukaryotic translation initiation factor 3 subunit G (271 aa).

3 disordered regions span residues 1–26, 63–119, and 147–187; these read MSTT…TNPD, AQRK…AQKL, and TTSS…RDDS. Phosphoserine is present on serine 77. In terms of domain architecture, RRM spans 188–267; sequence TTLKVSQLNS…LILHLEWSKK (80 aa).

This sequence belongs to the eIF-3 subunit G family. As to quaternary structure, component of the eukaryotic translation initiation factor 3 (eIF-3) complex.

It localises to the cytoplasm. Functionally, RNA-binding component of the eukaryotic translation initiation factor 3 (eIF-3) complex, which is involved in protein synthesis of a specialized repertoire of mRNAs and, together with other initiation factors, stimulates binding of mRNA and methionyl-tRNAi to the 40S ribosome. The eIF-3 complex specifically targets and initiates translation of a subset of mRNAs involved in cell proliferation. This subunit can bind 18S rRNA. In Scheffersomyces stipitis (strain ATCC 58785 / CBS 6054 / NBRC 10063 / NRRL Y-11545) (Yeast), this protein is Eukaryotic translation initiation factor 3 subunit G.